Reading from the N-terminus, the 520-residue chain is MSRFHSLLAFVVASLTAVAHAGIGPVADLTITNAAVSPDGFSRQAVVVNGGTPGPLITGNMGDRFQLNVIDNLTNHTMVKSTSIHWHGFFQKGTNWADGPAFINQCPISSGHSFLYDFQVPDQAGTFWYHSHLSTQYCDGLRGPFVVYDPNDPAADLYDVDNDDTVITLVDWYHVAAKLGPAFPLGADATLINGKGRSPSTTTADLSVISVTPGKRYRFRLVSLSCDPNYTFSIDGHNMTIIETDSINTAPLVVDSIQIFAAQRYSFVLEANQAVDNYWIRANPNFGNVGFTGGINSAILRYDGAAAVEPTTTQTTSTAPLNEVNLHPLVTTAVPGSPVAGGVDLAINMAFNFNGTNFFINGTSFTPPTVPVLLQIISGAQNAQDLLPSGSVYSLPSNADIEISFPATAAAPGAPHPFHLHGHAFAVVRSAGSTVYNYDNPIFRDVVSTGTPAAGDNVTIRFRTDNPGPWFLHCHIDFHLEAGFAVVFAEDIPDVASANPVPQAWSDLCPTYDALDPSDQ.

The N-terminal stretch at 1-21 (MSRFHSLLAFVVASLTAVAHA) is a signal peptide. 2 Plastocyanin-like domains span residues 23–148 (IGPV…FVVY) and 160–302 (VDND…ILRY). 2 N-linked (GlcNAc...) asparagine glycosylation sites follow: N72 and N75. 4 residues coordinate Cu cation: H85, H87, H130, and H132. Cystine bridges form between C106/C509 and C138/C226. Residues N229, N238, N354, and N361 are each glycosylated (N-linked (GlcNAc...) asparagine). Positions 369–491 (TVPVLLQIIS…AGFAVVFAED (123 aa)) constitute a Plastocyanin-like 3 domain. The Cu cation site is built by H416, H419, H421, H473, C474, H475, and H479.

The protein belongs to the multicopper oxidase family. In terms of assembly, homodimer. Cu cation serves as cofactor.

Its subcellular location is the secreted. It carries out the reaction 4 hydroquinone + O2 = 4 benzosemiquinone + 2 H2O. Functionally, lignin degradation and detoxification of lignin-derived products. The chain is Laccase-1 from Trametes villosa (White-rot fungus).